A 691-amino-acid polypeptide reads, in one-letter code: Penicillin-binding protein 2D (691 aa).

Topologically, residues 1-19 (MDAMTNKRLRLTLKTVRAF) are cytoplasmic. The helical; Signal-anchor for type II membrane protein transmembrane segment at 20–40 (IFLGAFAALAAAAVFMTVILI) threads the bilayer. Residues 41–691 (AKYQGAPSVQ…WWDKWLGRHH (651 aa)) are Extracellular-facing. Residues 55–223 (TILYASDGSK…PSGYSPYVNE (169 aa)) form a transglycosylase region. E94 functions as the Proton donor; for transglycosylase activity in the catalytic mechanism. The interval 327-605 (VGFSAIDPRT…AKTIWADFME (279 aa)) is transpeptidase. S365 serves as the catalytic Acyl-ester intermediate; for transpeptidase activity. The interval 663 to 691 (AKQTKDRLPSKEKPASEKKWWDKWLGRHH) is disordered. The segment covering 664–691 (KQTKDRLPSKEKPASEKKWWDKWLGRHH) has biased composition (basic and acidic residues).

In the N-terminal section; belongs to the glycosyltransferase 51 family. It in the C-terminal section; belongs to the transpeptidase family.

The protein resides in the cell membrane. The catalysed reaction is [GlcNAc-(1-&gt;4)-Mur2Ac(oyl-L-Ala-gamma-D-Glu-L-Lys-D-Ala-D-Ala)](n)-di-trans,octa-cis-undecaprenyl diphosphate + beta-D-GlcNAc-(1-&gt;4)-Mur2Ac(oyl-L-Ala-gamma-D-Glu-L-Lys-D-Ala-D-Ala)-di-trans,octa-cis-undecaprenyl diphosphate = [GlcNAc-(1-&gt;4)-Mur2Ac(oyl-L-Ala-gamma-D-Glu-L-Lys-D-Ala-D-Ala)](n+1)-di-trans,octa-cis-undecaprenyl diphosphate + di-trans,octa-cis-undecaprenyl diphosphate + H(+). It carries out the reaction Preferential cleavage: (Ac)2-L-Lys-D-Ala-|-D-Ala. Also transpeptidation of peptidyl-alanyl moieties that are N-acyl substituents of D-alanine.. It functions in the pathway cell wall biogenesis; peptidoglycan biosynthesis. Involved in the polymerization and cross-linking of spore peptidoglycan. May be required for synthesis of the spore germ cell wall, the first layer of peptidoglycan synthesized on the surface of the inner forespore membrane. The polypeptide is Penicillin-binding protein 2D (pbpG) (Bacillus subtilis (strain 168)).